Reading from the N-terminus, the 645-residue chain is Synaptotagmin-16 (645 aa).

Disordered stretches follow at residues alanine 102–serine 121, glutamate 144–glutamate 192, and glutamine 206–valine 344. Over residues glutamate 167–serine 177 the composition is skewed to polar residues. The segment covering glycine 179–glutamate 192 has biased composition (acidic residues). Over residues histidine 287–glycine 303 the composition is skewed to polar residues. The C2 1 domain maps to lysine 350–leucine 469. Residues serine 478–histidine 503 form a disordered region. The segment covering serine 485–serine 502 has biased composition (low complexity). Residues glycine 505–histidine 640 enclose the C2 2 domain.

Belongs to the synaptotagmin family. In terms of assembly, homodimer. Can also form heterodimers. In terms of tissue distribution, expressed in brain.

Its function is as follows. May be involved in the trafficking and exocytosis of secretory vesicles in non-neuronal tissues. Is Ca(2+)-independent. This is Synaptotagmin-16 (SYT16) from Homo sapiens (Human).